The following is a 134-amino-acid chain: Profilin-3 (134 aa).

A disulfide bridge connects residues Cys13 and Cys118. The short motif at 84–100 (AVIRGKKGSGGITIKKT) is the Involved in PIP2 interaction element. The residue at position 114 (Thr114) is a Phosphothreonine.

The protein belongs to the profilin family. In terms of assembly, occurs in many kinds of cells as a complex with monomeric actin in a 1:1 ratio. Phosphorylated by MAP kinases.

It is found in the cytoplasm. Its subcellular location is the cytoskeleton. Its function is as follows. Binds to actin and affects the structure of the cytoskeleton. At high concentrations, profilin prevents the polymerization of actin, whereas it enhances it at low concentrations. By binding to PIP2, it inhibits the formation of IP3 and DG. The protein is Profilin-3 (PRO3) of Olea europaea (Common olive).